A 195-amino-acid chain; its full sequence is Imidazoleglycerol-phosphate dehydratase (195 aa).

The protein belongs to the imidazoleglycerol-phosphate dehydratase family.

The protein resides in the cytoplasm. It catalyses the reaction D-erythro-1-(imidazol-4-yl)glycerol 3-phosphate = 3-(imidazol-4-yl)-2-oxopropyl phosphate + H2O. It functions in the pathway amino-acid biosynthesis; L-histidine biosynthesis; L-histidine from 5-phospho-alpha-D-ribose 1-diphosphate: step 6/9. The chain is Imidazoleglycerol-phosphate dehydratase from Burkholderia multivorans (strain ATCC 17616 / 249).